Reading from the N-terminus, the 410-residue chain is Protein translocase subunit SecY 2 (410 aa).

Transmembrane regions (helical) follow at residues 2 to 22 (ILIIYRALFFVTIPGVNSAAL), 45 to 65 (FSIMSLGVTAYITAQIIVQLL), 94 to 114 (LTLVLGLVQATGITLGINTLT), 125 to 145 (FTIIVIAVSMTAGSFIAMWLG), 147 to 167 (LITENGLGNGISVIITAGILV), 188 to 208 (WIRFSELMIGAAILILLIVWF), 241 to 261 (VIPVIFASTIMTIPQTILMFF), 284 to 304 (GVIIYGLMIIFFEYLYSIVQI), 339 to 359 (YLSLPGSLFLMLVSIIPLLVA), and 366 to 386 (LQIGLSGSSILIITGVLIEIG).

Belongs to the SecY/SEC61-alpha family. In terms of assembly, component of the Sec protein translocase complex. Heterotrimer consisting of SecY, SecE and SecG subunits. The heterotrimers can form oligomers, although 1 heterotrimer is thought to be able to translocate proteins. Interacts with the ribosome. Interacts with SecDF, and other proteins may be involved. Interacts with SecA.

It is found in the cell membrane. Its function is as follows. The central subunit of the protein translocation channel SecYEG. Consists of two halves formed by TMs 1-5 and 6-10. These two domains form a lateral gate at the front which open onto the bilayer between TMs 2 and 7, and are clamped together by SecE at the back. The channel is closed by both a pore ring composed of hydrophobic SecY resides and a short helix (helix 2A) on the extracellular side of the membrane which forms a plug. The plug probably moves laterally to allow the channel to open. The ring and the pore may move independently. This Lactobacillus kefiranofaciens subsp. kefiranofaciens protein is Protein translocase subunit SecY 2.